Consider the following 446-residue polypeptide: Minor teichoic acid biosynthesis protein GgaA (446 aa).

Belongs to the glycosyltransferase 2 family.

Its pathway is cell wall biogenesis; poly(glucopyranosyl N-acetylgalactosamine 1-phosphate) teichoic acid biosynthesis. Its function is as follows. Involved in the biosynthesis of galactosamine-containing minor teichoic acid, a non-essential cell wall polymer in B.subtilis 168. In Bacillus subtilis (strain 168), this protein is Minor teichoic acid biosynthesis protein GgaA (ggaA).